Consider the following 288-residue polypeptide: Aminoglycoside N(3)-acetyltransferase VII (288 aa).

The protein belongs to the antibiotic N-acetyltransferase family.

It catalyses the reaction a 2-deoxystreptamine antibiotic + acetyl-CoA = an N(3)-acetyl-2-deoxystreptamine antibiotic + CoA + H(+). In terms of biological role, resistance to paromomycin. This chain is Aminoglycoside N(3)-acetyltransferase VII (aacC7), found in Streptomyces paromomycinus (Streptomyces rimosus subsp. paromomycinus).